The following is a 214-amino-acid chain: Ribonuclease HII (214 aa).

The 191-residue stretch at 18–208 (SRVVGVDEVG…SLLPSEAHLC (191 aa)) folds into the RNase H type-2 domain. The a divalent metal cation site is built by aspartate 24, glutamate 25, and aspartate 116.

Belongs to the RNase HII family. Mn(2+) is required as a cofactor. It depends on Mg(2+) as a cofactor.

Its subcellular location is the cytoplasm. It catalyses the reaction Endonucleolytic cleavage to 5'-phosphomonoester.. Its function is as follows. Endonuclease that specifically degrades the RNA of RNA-DNA hybrids. This Thermosynechococcus vestitus (strain NIES-2133 / IAM M-273 / BP-1) protein is Ribonuclease HII.